We begin with the raw amino-acid sequence, 286 residues long: MYVFDPTTEAGLRLEMAFPQHGFMFQQLHEDNSQDQLPSCPPHLFNGGGNYMMNRSMSLMNVQEDHNQTLDEENLSDDGAHTMLGEKKKRLQLEQVKALEKSFELGNKLEPERKIQLAKALGMQPRQIAIWFQNRRARWKTRQLERDYDSLKKQFESLKSDNASLLAYNKKLLAEVMALKNKECNEGNIVKREAEASWSNNGSTENSSDINLEMPRETITTHVNTIKDLFPSSIRSSAHDDDHHQNHEIVQEESLCNMFNGIDETTPAGYWAWSDPNHNHHHHQFN.

A DNA-binding region (homeobox) is located at residues 84-143 (LGEKKKRLQLEQVKALEKSFELGNKLEPERKIQLAKALGMQPRQIAIWFQNRRARWKTRQ). The interval 144–179 (LERDYDSLKKQFESLKSDNASLLAYNKKLLAEVMAL) is leucine-zipper.

Belongs to the HD-ZIP homeobox family. Class I subfamily. In terms of tissue distribution, widely expressed.

Its subcellular location is the nucleus. Functionally, probable transcription factor. The protein is Homeobox-leucine zipper protein ATHB-20 (ATHB-20) of Arabidopsis thaliana (Mouse-ear cress).